The following is a 392-amino-acid chain: Stilbene synthase 4 (392 aa).

A substrate-binding site is contributed by 55-58 (KFNR). Residue Cys-164 is part of the active site. Substrate-binding positions include Leu-267 and 305-307 (GGP).

It belongs to the thiolase-like superfamily. Chalcone/stilbene synthases family. As to quaternary structure, homodimer.

The protein localises to the cytoplasm. It carries out the reaction 4-coumaroyl-CoA + 3 malonyl-CoA + 3 H(+) = trans-resveratrol + 4 CO2 + 4 CoA. Its pathway is phytoalexin biosynthesis; 3,4',5-trihydroxystilbene biosynthesis; 3,4',5-trihydroxystilbene from trans-4-coumarate: step 2/2. Its function is as follows. Mediates resistance to pathogens which are sensitive to stilbenes. The chain is Stilbene synthase 4 from Vitis vinifera (Grape).